The sequence spans 484 residues: ATP synthase subunit beta (484 aa).

Residue 162–169 coordinates ATP; sequence GGAGVGKT.

This sequence belongs to the ATPase alpha/beta chains family. As to quaternary structure, F-type ATPases have 2 components, CF(1) - the catalytic core - and CF(0) - the membrane proton channel. CF(1) has five subunits: alpha(3), beta(3), gamma(1), delta(1), epsilon(1). CF(0) has three main subunits: a(1), b(2) and c(9-12). The alpha and beta chains form an alternating ring which encloses part of the gamma chain. CF(1) is attached to CF(0) by a central stalk formed by the gamma and epsilon chains, while a peripheral stalk is formed by the delta and b chains.

It localises to the cell inner membrane. The catalysed reaction is ATP + H2O + 4 H(+)(in) = ADP + phosphate + 5 H(+)(out). Produces ATP from ADP in the presence of a proton gradient across the membrane. The catalytic sites are hosted primarily by the beta subunits. The polypeptide is ATP synthase subunit beta (Agrobacterium fabrum (strain C58 / ATCC 33970) (Agrobacterium tumefaciens (strain C58))).